A 115-amino-acid chain; its full sequence is Cyclin-dependent kinase 2-associated protein 1 (115 aa).

Residues 20 to 25 (GSVHSP) are interaction with CDK2AP2. A Phosphoserine; by IKKE modification is found at Ser46.

It belongs to the CDK2AP family. As to quaternary structure, homodimer. Component of the nucleosome remodeling and deacetylase (NuRD) repressor complex, composed of core proteins MTA1, MTA2, MTA3, RBBP4, RBBP7, HDAC1, HDAC2, MBD2, MBD3, and peripherally associated proteins CDK2AP1, CDK2AP2, GATAD2A, GATAD2B, CHD3, CHD4 and CHD5. The exact stoichiometry of the NuRD complex is unknown, and some subunits such as MBD2 and MBD3, GATAD2A and GATAD2B, and CHD3, CHD4 and CHD5 define mutually exclusive NuRD complexes. Interacts with monomeric unphosphorylated CDK2. Interacts with CDK2AP2. Interacts with GATAD2A. Interacts with HDAC1. Interacts with HDAC2. Interacts with MBD2. Interacts with MBD3. Interacts with RBBP4. Interacts with RBBP7. Phosphorylated in vitro by IKBKE at Ser-46.

It is found in the nucleus. It localises to the chromosome. In terms of biological role, inhibitor of cyclin-dependent kinase CDK2. Also acts as a component of the histone deacetylase NuRD complex which participates in the remodeling of chromatin. The sequence is that of Cyclin-dependent kinase 2-associated protein 1 (CDK2AP1) from Homo sapiens (Human).